A 742-amino-acid polypeptide reads, in one-letter code: Phosphoribosylformylglycinamidine synthase subunit PurL (742 aa).

Residue His50 is part of the active site. Residues Tyr53 and Lys92 each contribute to the ATP site. A Mg(2+)-binding site is contributed by Glu94. Substrate is bound by residues 95–98 (SHNH) and Arg117. The active-site Proton acceptor is the His96. Asp118 is a binding site for Mg(2+). Residue Gln241 participates in substrate binding. Asp269 contributes to the Mg(2+) binding site. 313–315 (ESQ) contacts substrate. 2 residues coordinate ATP: Asp494 and Gly531. Asn532 contacts Mg(2+). Ser534 contributes to the substrate binding site.

The protein belongs to the FGAMS family. Monomer. Part of the FGAM synthase complex composed of 1 PurL, 1 PurQ and 2 PurS subunits.

It is found in the cytoplasm. It catalyses the reaction N(2)-formyl-N(1)-(5-phospho-beta-D-ribosyl)glycinamide + L-glutamine + ATP + H2O = 2-formamido-N(1)-(5-O-phospho-beta-D-ribosyl)acetamidine + L-glutamate + ADP + phosphate + H(+). It participates in purine metabolism; IMP biosynthesis via de novo pathway; 5-amino-1-(5-phospho-D-ribosyl)imidazole from N(2)-formyl-N(1)-(5-phospho-D-ribosyl)glycinamide: step 1/2. Functionally, part of the phosphoribosylformylglycinamidine synthase complex involved in the purines biosynthetic pathway. Catalyzes the ATP-dependent conversion of formylglycinamide ribonucleotide (FGAR) and glutamine to yield formylglycinamidine ribonucleotide (FGAM) and glutamate. The FGAM synthase complex is composed of three subunits. PurQ produces an ammonia molecule by converting glutamine to glutamate. PurL transfers the ammonia molecule to FGAR to form FGAM in an ATP-dependent manner. PurS interacts with PurQ and PurL and is thought to assist in the transfer of the ammonia molecule from PurQ to PurL. The protein is Phosphoribosylformylglycinamidine synthase subunit PurL of Sinorhizobium fredii (strain NBRC 101917 / NGR234).